The primary structure comprises 735 residues: Peroxisomal multifunctional enzyme type 2 (735 aa).

Residues 1–305 (MASPLRFDGR…IEVLHKIDSE (305 aa)) form a (3R)-hydroxyacyl-CoA dehydrogenase region. Residues 16 to 40 (GAGG…VVND), L21, and D40 each bind NAD(+). K46 is modified (N6-acetyllysine; alternate). Residue K46 is modified to N6-succinyllysine; alternate. Phosphoserine is present on S52. K57 and K68 each carry N6-succinyllysine. 75–76 (SV) contributes to the NAD(+) binding site. The residue at position 84 (K84) is an N6-succinyllysine. N99 provides a ligand contact to NAD(+). Substrate is bound at residue S151. The active-site Proton acceptor is the Y164. Residues 164–168 (YSAAK) and 196–199 (AGSR) contribute to the NAD(+) site. T265 carries the post-translational modification Phosphothreonine. At K275 the chain carries N6-succinyllysine. A phosphoserine mark is found at S304 and S308. The enoyl-CoA hydratase 2 stretch occupies residues 321-621 (SGFAGVVGHK…AQTPSEGGAL (301 aa)). N6-succinyllysine is present on K355. 405 to 406 (HG) lines the (3R)-3-hydroxydecanoyl-CoA pocket. K423 is subject to N6-succinyllysine. (3R)-3-hydroxydecanoyl-CoA contacts are provided by residues K434, 509-514 (DSNPLH), G532, and F562. A MaoC-like domain is found at 483–599 (VPSRPPDAVL…QETGDIVISN (117 aa)). Position 564 is an N6-acetyllysine (K564). 2 positions are modified to N6-succinyllysine: K578 and K662. The SCP2 domain maps to 623–735 (SALVFGEIGR…QMILKDYAKL (113 aa)). An N6-acetyllysine modification is found at K668. Substrate-binding residues include Q705 and Q723. K724 bears the N6-succinyllysine mark. The Microbody targeting signal motif lies at 733–735 (AKL).

Belongs to the short-chain dehydrogenases/reductases (SDR) family. Homodimer.

Its subcellular location is the peroxisome. The enzyme catalyses a (3R)-3-hydroxyacyl-CoA + NAD(+) = a 3-oxoacyl-CoA + NADH + H(+). It catalyses the reaction (24R,25R)-3alpha,7alpha,12alpha,24-tetrahydroxy-5beta-cholestan-26-oyl-CoA = (24E)-3alpha,7alpha,12alpha-trihydroxy-5beta-cholest-24-en-26-oyl-CoA + H2O. It carries out the reaction a (3R)-3-hydroxyacyl-CoA = a (2E)-enoyl-CoA + H2O. The catalysed reaction is (2E)-octenoyl-CoA + H2O = (3R)-hydroxyoctanoyl-CoA. The enzyme catalyses (3R)-hydroxyoctanoyl-CoA + NAD(+) = 3-oxooctanoyl-CoA + NADH + H(+). It catalyses the reaction (3R)-hydroxyhexadecanoyl-CoA + NAD(+) = 3-oxohexadecanoyl-CoA + NADH + H(+). It carries out the reaction (2E)-hexadecenedioyl-CoA + H2O = (3R)-hydroxyhexadecanedioyl-CoA. The catalysed reaction is (3R)-hydroxyhexadecanedioyl-CoA + NAD(+) = 3-oxohexadecanedioyl-CoA + NADH + H(+). The enzyme catalyses (3R)-hydroxyhexadecanoyl-CoA = (2E)-hexadecenoyl-CoA + H2O. It catalyses the reaction (3R)-3-hydroxydecanoyl-CoA = (2E)-decenoyl-CoA + H2O. It carries out the reaction (3R)-3-hydroxydecanoyl-CoA + NAD(+) = 3-oxodecanoyl-CoA + NADH + H(+). The catalysed reaction is (24R,25R)-3alpha,7alpha,12alpha,24-tetrahydroxy-5beta-cholestan-26-oyl-CoA + NAD(+) = 3alpha,7alpha,12alpha-trihydroxy-24-oxo-5beta-cholestan-26-oyl-CoA + NADH + H(+). It functions in the pathway lipid metabolism; fatty acid beta-oxidation. Bifunctional enzyme acting on the peroxisomal fatty acid beta-oxidation pathway. Catalyzes two of the four reactions in fatty acid degradation: hydration of 2-enoyl-CoA (trans-2-enoyl-CoA) to produce (3R)-3-hydroxyacyl-CoA, and dehydrogenation of (3R)-3-hydroxyacyl-CoA to produce 3-ketoacyl-CoA (3-oxoacyl-CoA), which is further metabolized by SCPx. Can use straight-chain and branched-chain fatty acids, as well as bile acid intermediates as substrates. The sequence is that of Peroxisomal multifunctional enzyme type 2 from Rattus norvegicus (Rat).